Reading from the N-terminus, the 374-residue chain is Retron Eco8 reverse transcriptase (374 aa).

The Reverse transcriptase domain maps to Glu25–Ile252. 3 residues coordinate Mg(2+): Asp107, Asp200, and Asp201.

It belongs to the bacterial reverse transcriptase family.

It catalyses the reaction DNA(n) + a 2'-deoxyribonucleoside 5'-triphosphate = DNA(n+1) + diphosphate. Its function is as follows. Reverse transcriptase (RT) component of antiviral defense system retron Eco8, composed of this RT, the following endonuclease and a non-coding RNA (ncRNA) encoded between them. Expression of retron Eco8 confers protection against bacteriophages T4, T6, T7 and SECphi4, SECphi6 and SECphi18. At multiplicity of infection (MOI) of 0.02 cultures slow growth when infected with SECphi4 but do not collapse, at MOI 2 cultures collapse. Responsible for synthesis of msDNA (a branched molecule with RNA linked by a 2',5'-phosphodiester bond to ssDNA). The retron transcript serves as primer (from a conserved internal G residue) and template for the reaction, and codes for the RT. The protein is Retron Eco8 reverse transcriptase of Escherichia coli.